Here is a 356-residue protein sequence, read N- to C-terminus: Phospho-N-acetylmuramoyl-pentapeptide-transferase (356 aa).

The next 10 membrane-spanning stretches (helical) occupy residues 25–45 (TVAA…SIIA), 70–90 (GTPT…AFLW), 93–113 (LSNI…MIGF), 138–158 (FLIA…GLAL), 164–184 (YFIN…VGTG), 195–215 (GLAI…AYLS), 235–255 (LAVL…FNAP), 258–278 (AIFM…IVAV), 284–304 (IVLA…VIQV), and 333–353 (QVVI…LSTL).

This sequence belongs to the glycosyltransferase 4 family. MraY subfamily. It depends on Mg(2+) as a cofactor.

It is found in the cell inner membrane. The catalysed reaction is UDP-N-acetyl-alpha-D-muramoyl-L-alanyl-gamma-D-glutamyl-meso-2,6-diaminopimeloyl-D-alanyl-D-alanine + di-trans,octa-cis-undecaprenyl phosphate = di-trans,octa-cis-undecaprenyl diphospho-N-acetyl-alpha-D-muramoyl-L-alanyl-D-glutamyl-meso-2,6-diaminopimeloyl-D-alanyl-D-alanine + UMP. The protein operates within cell wall biogenesis; peptidoglycan biosynthesis. Its function is as follows. Catalyzes the initial step of the lipid cycle reactions in the biosynthesis of the cell wall peptidoglycan: transfers peptidoglycan precursor phospho-MurNAc-pentapeptide from UDP-MurNAc-pentapeptide onto the lipid carrier undecaprenyl phosphate, yielding undecaprenyl-pyrophosphoryl-MurNAc-pentapeptide, known as lipid I. The polypeptide is Phospho-N-acetylmuramoyl-pentapeptide-transferase (Bartonella quintana (strain Toulouse) (Rochalimaea quintana)).